Here is a 253-residue protein sequence, read N- to C-terminus: Demethylmenaquinone methyltransferase (253 aa).

Residues threonine 75, aspartate 96, and 124–125 (DA) contribute to the S-adenosyl-L-methionine site.

Belongs to the class I-like SAM-binding methyltransferase superfamily. MenG/UbiE family.

It catalyses the reaction a 2-demethylmenaquinol + S-adenosyl-L-methionine = a menaquinol + S-adenosyl-L-homocysteine + H(+). Its pathway is quinol/quinone metabolism; menaquinone biosynthesis; menaquinol from 1,4-dihydroxy-2-naphthoate: step 2/2. Its function is as follows. Methyltransferase required for the conversion of demethylmenaquinol (DMKH2) to menaquinol (MKH2). The protein is Demethylmenaquinone methyltransferase of Desulfitobacterium hafniense (strain Y51).